A 453-amino-acid polypeptide reads, in one-letter code: Ribulose bisphosphate carboxylase large chain (453 aa).

The propeptide occupies 1–2 (MS). Proline 3 carries the post-translational modification N-acetylproline. Residue lysine 14 is modified to N6,N6,N6-trimethyllysine. 2 residues coordinate substrate: asparagine 123 and threonine 173. Lysine 175 (proton acceptor) is an active-site residue. Lysine 177 serves as a coordination point for substrate. 3 residues coordinate Mg(2+): lysine 201, aspartate 203, and glutamate 204. Lysine 201 carries the N6-carboxylysine modification. Histidine 294 functions as the Proton acceptor in the catalytic mechanism. Positions 295, 327, and 379 each coordinate substrate.

It belongs to the RuBisCO large chain family. Type I subfamily. As to quaternary structure, heterohexadecamer of 8 large chains and 8 small chains; disulfide-linked. The disulfide link is formed within the large subunit homodimers. The cofactor is Mg(2+). Post-translationally, the disulfide bond which can form in the large chain dimeric partners within the hexadecamer appears to be associated with oxidative stress and protein turnover.

Its subcellular location is the plastid. The protein resides in the chloroplast. The catalysed reaction is 2 (2R)-3-phosphoglycerate + 2 H(+) = D-ribulose 1,5-bisphosphate + CO2 + H2O. The enzyme catalyses D-ribulose 1,5-bisphosphate + O2 = 2-phosphoglycolate + (2R)-3-phosphoglycerate + 2 H(+). Functionally, ruBisCO catalyzes two reactions: the carboxylation of D-ribulose 1,5-bisphosphate, the primary event in carbon dioxide fixation, as well as the oxidative fragmentation of the pentose substrate in the photorespiration process. Both reactions occur simultaneously and in competition at the same active site. The sequence is that of Ribulose bisphosphate carboxylase large chain from Cruciata glabra (Slender crosswort).